Reading from the N-terminus, the 316-residue chain is MSGRSPKAPRAPSSTRAGGLVVAAHGRHYLVAPDDGGAMLQCFPRGKRSEVAVGDHVIYELASADQGVIVEIGERRNLLYRSDQYKSKLFAANLDQLLIVLATEPHFSEDLLGRALVAAEANGLKPLIVLNKTDVTDELEGARKRLEPYRALGYTVVEVSIRTQPEAARAALIERLHGHSTLLLGQSGMGKSTLVNLLIPDAEVATREISTALNSGRHTTTFTRLYPLPDSADGTGGSLIDSPGFQEFGLHHLTEGRLERAFPEFRPLLPNCRFYNCHHLHEPGCAILEAVADGRIRRERHALYAQLVHEASQIVR.

In terms of domain architecture, CP-type G spans 83 to 248 (DQYKSKLFAA…LIDSPGFQEF (166 aa)). Residues 131–134 (NKTD) and 185–193 (GQSGMGKST) contribute to the GTP site. Zn(2+)-binding residues include Cys272, Cys277, His279, and Cys285.

The protein belongs to the TRAFAC class YlqF/YawG GTPase family. RsgA subfamily. As to quaternary structure, monomer. Associates with 30S ribosomal subunit, binds 16S rRNA. Zn(2+) is required as a cofactor.

It localises to the cytoplasm. Its function is as follows. One of several proteins that assist in the late maturation steps of the functional core of the 30S ribosomal subunit. Helps release RbfA from mature subunits. May play a role in the assembly of ribosomal proteins into the subunit. Circularly permuted GTPase that catalyzes slow GTP hydrolysis, GTPase activity is stimulated by the 30S ribosomal subunit. This is Small ribosomal subunit biogenesis GTPase RsgA from Paraburkholderia xenovorans (strain LB400).